Reading from the N-terminus, the 872-residue chain is Alanine--tRNA ligase (872 aa).

Zn(2+) contacts are provided by histidine 567, histidine 571, cysteine 669, and histidine 673.

It belongs to the class-II aminoacyl-tRNA synthetase family. Zn(2+) is required as a cofactor.

The protein localises to the cytoplasm. It catalyses the reaction tRNA(Ala) + L-alanine + ATP = L-alanyl-tRNA(Ala) + AMP + diphosphate. In terms of biological role, catalyzes the attachment of alanine to tRNA(Ala) in a two-step reaction: alanine is first activated by ATP to form Ala-AMP and then transferred to the acceptor end of tRNA(Ala). Also edits incorrectly charged Ser-tRNA(Ala) and Gly-tRNA(Ala) via its editing domain. The sequence is that of Alanine--tRNA ligase from Streptococcus pneumoniae serotype 4 (strain ATCC BAA-334 / TIGR4).